We begin with the raw amino-acid sequence, 524 residues long: Tyrosine-protein kinase HCK (524 aa).

A disordered region spans residues 1–72 (MGGRSSCEDP…NNSNSMPPGF (72 aa)). G2 carries N-myristoyl glycine lipidation. G3 carries the S-palmitoyl cysteine lipid modification. Residues 29–38 (FLRDGSKASK) show a composition bias toward basic and acidic residues. At Y50 the chain carries Phosphotyrosine; by autocatalysis. The segment covering 54–68 (PTSSSKLGPNNSNSM) has biased composition (polar residues). The SH3 domain occupies 76–136 (SEDTIVVALY…PSNYVARVNS (61 aa)). Positions 142–239 (WFFKGISRKD…GLCQKLSVPC (98 aa)) constitute an SH2 domain. T200 carries the post-translational modification Phosphothreonine. Y207 carries the phosphotyrosine modification. In terms of domain architecture, Protein kinase spans 260–513 (LQMEKKLGAG…YIQSVLDDFY (254 aa)). Residues 266–274 (LGAGQFGEV) and K288 contribute to the ATP site. Catalysis depends on D379, which acts as the Proton acceptor. Y409 is subject to Phosphotyrosine; by autocatalysis. S460 carries the post-translational modification Phosphoserine. Residue Y520 is modified to Phosphotyrosine.

The protein belongs to the protein kinase superfamily. Tyr protein kinase family. SRC subfamily. As to quaternary structure, interacts with ADAM15. Interacts with FASLG. Interacts with ARRB1 and ARRB2. Interacts with FCGR1A; the interaction may be indirect. Interacts with IL6ST. Interacts (via SH3 domain) with ELMO1. Interacts (via SH3 domain) with TP73. Interacts with YAP1. Interacts with ABL1 and ITGB1, and thereby recruits ABL1 to activated ITGB1. Interacts (via SH2 domain) with FLT3 (tyrosine phosphorylated). Interacts with CBL. Interacts with VAV1, WAS and RAPGEF1. Interacts (via SH3 domain) with WDCP. Phosphorylated on several tyrosine residues. Autophosphorylated. Becomes rapidly phosphorylated upon activation of the immunoglobulin receptors FCGR1A and FCGR2A. Phosphorylation at Tyr-409 increases kinase activity. Phosphorylation at Tyr-520 inhibits kinase activity. Kinase activity is not required for phosphorylation at Tyr-520, suggesting that this site may be a target of other kinases. Post-translationally, ubiquitinated by CBL, leading to its degradation via the proteasome. In terms of processing, isoform 2 palmitoylation at position 2 requires prior myristoylation. Palmitoylation at position 3 is required for caveolar localization of isoform 2. Expressed predominantly in cells of the myeloid and B-lymphoid lineages.

Its subcellular location is the cytoplasmic vesicle. The protein localises to the secretory vesicle. It localises to the cytoplasm. The protein resides in the cytosol. It is found in the membrane. Its subcellular location is the caveola. The protein localises to the lysosome. It localises to the cell projection. The protein resides in the podosome membrane. It is found in the cell membrane. Its subcellular location is the cell junction. The protein localises to the focal adhesion. It localises to the cytoskeleton. The protein resides in the golgi apparatus. It is found in the nucleus. The catalysed reaction is L-tyrosyl-[protein] + ATP = O-phospho-L-tyrosyl-[protein] + ADP + H(+). With respect to regulation, subject to autoinhibition, mediated by intramolecular interactions involving the SH2 and SH3 domains. Kinase activity is also regulated by phosphorylation at regulatory tyrosine residues. Phosphorylation at Tyr-409 is required for optimal activity. Phosphorylation at Tyr-520 inhibits kinase activity. Inhibited by PP1. Non-receptor tyrosine-protein kinase found in hematopoietic cells that transmits signals from cell surface receptors and plays an important role in the regulation of innate immune responses, including neutrophil, monocyte, macrophage and mast cell functions, phagocytosis, cell survival and proliferation, cell adhesion and migration. Acts downstream of receptors that bind the Fc region of immunoglobulins, such as FCGR1A and FCGR2A, but also CSF3R, PLAUR, the receptors for IFNG, IL2, IL6 and IL8, and integrins, such as ITGB1 and ITGB2. During the phagocytic process, mediates mobilization of secretory lysosomes, degranulation, and activation of NADPH oxidase to bring about the respiratory burst. Plays a role in the release of inflammatory molecules. Promotes reorganization of the actin cytoskeleton and actin polymerization, formation of podosomes and cell protrusions. Inhibits TP73-mediated transcription activation and TP73-mediated apoptosis. Phosphorylates CBL in response to activation of immunoglobulin gamma Fc region receptors. Phosphorylates ADAM15, BCR, ELMO1, FCGR2A, GAB1, GAB2, RAPGEF1, STAT5B, TP73, VAV1 and WAS. The sequence is that of Tyrosine-protein kinase HCK (Hck) from Mus musculus (Mouse).